The sequence spans 143 residues: uncharacterized protein (143 aa).

A helical membrane pass occupies residues 65–85 (LVWMLVGTIVLSLDIIFPALV).

It localises to the membrane. This is an uncharacterized protein from Saccharomyces cerevisiae (strain ATCC 204508 / S288c) (Baker's yeast).